We begin with the raw amino-acid sequence, 168 residues long: Small ribosomal subunit protein uS5 (168 aa).

Residues 13–76 (LEENVVAINR…EDAKRKLITV (64 aa)) form the S5 DRBM domain.

This sequence belongs to the universal ribosomal protein uS5 family. As to quaternary structure, part of the 30S ribosomal subunit. Contacts proteins S4 and S8.

With S4 and S12 plays an important role in translational accuracy. Its function is as follows. Located at the back of the 30S subunit body where it stabilizes the conformation of the head with respect to the body. This Leuconostoc mesenteroides subsp. mesenteroides (strain ATCC 8293 / DSM 20343 / BCRC 11652 / CCM 1803 / JCM 6124 / NCDO 523 / NBRC 100496 / NCIMB 8023 / NCTC 12954 / NRRL B-1118 / 37Y) protein is Small ribosomal subunit protein uS5.